Reading from the N-terminus, the 449-residue chain is MSRNYFGTDGIRGRANGLITPELALKVGQAAGLLFQRGEHRHRVVIGKDTRLSGYMIEYAMVAGFTSVGMDVLLVGPMPTPAVAMLTKSMRADLGVMISASHNLFEDNGIKLFGPQGFKLSDDVEKQIEQLLDESLDKKLAQSASLGRARRIDGVHDRYIEFAKRTLPRDLSLDGLRVVVDCANGAAYKVVPEALWELGADVISIGVEPDGFNINKECGSTSPEALCRKVREMRADIGIALDGDADRVILVDERGHIVDGDQLLAVIAQSWKEDGRLARPGIVATVMSNLGLERFLQGQGLELVRTPVGDRYVLERMLADGYNLGGEQSGHIILSDYATTGDGFVAALQVLATVQRLRRPVSEVCHKFDPLPQILKNVRYRSGKPLDADAVKSAIDTGQKRLNGHGRLLVRSSGTEPVIRVMGEGDDRDLVEEVVDDIVTAVGNAAAAA.

S101 serves as the catalytic Phosphoserine intermediate. The Mg(2+) site is built by S101, D242, D244, and D246. A Phosphoserine modification is found at S101.

This sequence belongs to the phosphohexose mutase family. Requires Mg(2+) as cofactor. In terms of processing, activated by phosphorylation.

The catalysed reaction is alpha-D-glucosamine 1-phosphate = D-glucosamine 6-phosphate. In terms of biological role, catalyzes the conversion of glucosamine-6-phosphate to glucosamine-1-phosphate. In Bradyrhizobium sp. (strain BTAi1 / ATCC BAA-1182), this protein is Phosphoglucosamine mutase.